A 682-amino-acid chain; its full sequence is DNA-directed RNA polymerase subunit beta' (682 aa).

Zn(2+)-binding residues include Cys69, Cys71, Cys87, and Cys90. Mg(2+) is bound by residues Asp489, Asp491, and Asp493.

This sequence belongs to the RNA polymerase beta' chain family. RpoC1 subfamily. In terms of assembly, in plastids the minimal PEP RNA polymerase catalytic core is composed of four subunits: alpha, beta, beta', and beta''. When a (nuclear-encoded) sigma factor is associated with the core the holoenzyme is formed, which can initiate transcription. The cofactor is Mg(2+). Zn(2+) is required as a cofactor.

It localises to the plastid. The protein localises to the chloroplast. It catalyses the reaction RNA(n) + a ribonucleoside 5'-triphosphate = RNA(n+1) + diphosphate. Functionally, DNA-dependent RNA polymerase catalyzes the transcription of DNA into RNA using the four ribonucleoside triphosphates as substrates. This chain is DNA-directed RNA polymerase subunit beta', found in Acorus calamus var. americanus (American sweet flag).